Here is a 654-residue protein sequence, read N- to C-terminus: Translation factor GUF1, mitochondrial (654 aa).

The tr-type G domain maps to 57–237; the sequence is ENYRNFSIVA…SVIKNIPSPV (181 aa). GTP contacts are provided by residues 66-73, 130-134, and 184-187; these read AHVDHGKS, DTPGH, and NKID.

This sequence belongs to the TRAFAC class translation factor GTPase superfamily. Classic translation factor GTPase family. LepA subfamily.

The protein resides in the mitochondrion inner membrane. It carries out the reaction GTP + H2O = GDP + phosphate + H(+). In terms of biological role, promotes mitochondrial protein synthesis. May act as a fidelity factor of the translation reaction, by catalyzing a one-codon backward translocation of tRNAs on improperly translocated ribosomes. Binds to mitochondrial ribosomes in a GTP-dependent manner. The protein is Translation factor GUF1, mitochondrial of Candida dubliniensis (strain CD36 / ATCC MYA-646 / CBS 7987 / NCPF 3949 / NRRL Y-17841) (Yeast).